Reading from the N-terminus, the 406-residue chain is Cysteine desulfurase (406 aa).

Lys226 carries the post-translational modification N6-(pyridoxal phosphate)lysine. The active-site Cysteine persulfide intermediate is Cys364.

Belongs to the class-V pyridoxal-phosphate-dependent aminotransferase family. Csd subfamily. In terms of assembly, homodimer. Interacts with SufE and the SufBCD complex composed of SufB, SufC and SufD. The interaction with SufE is required to mediate the direct transfer of the sulfur atom from the S-sulfanylcysteine. Requires pyridoxal 5'-phosphate as cofactor.

Its subcellular location is the cytoplasm. The enzyme catalyses (sulfur carrier)-H + L-cysteine = (sulfur carrier)-SH + L-alanine. It carries out the reaction L-selenocysteine + AH2 = hydrogenselenide + L-alanine + A + H(+). It participates in cofactor biosynthesis; iron-sulfur cluster biosynthesis. Functionally, cysteine desulfurases mobilize the sulfur from L-cysteine to yield L-alanine, an essential step in sulfur metabolism for biosynthesis of a variety of sulfur-containing biomolecules. Component of the suf operon, which is activated and required under specific conditions such as oxidative stress and iron limitation. Acts as a potent selenocysteine lyase in vitro, that mobilizes selenium from L-selenocysteine. Selenocysteine lyase activity is however unsure in vivo. The chain is Cysteine desulfurase from Escherichia coli O6:K15:H31 (strain 536 / UPEC).